The following is a 454-amino-acid chain: Lamina-associated polypeptide 2, isoforms beta/gamma (454 aa).

The nucleoplasmic stretch occupies residues Met1 to Ser410. The 44-residue stretch at Leu5–Arg48 folds into the LEM-like domain. Disordered regions lie at residues Ala47–Asn117 and Leu149–Ser265. The linker stretch occupies residues Asn49–Asp108. A Phosphothreonine modification is found at Thr57. 3 positions are modified to phosphoserine: Ser59, Ser66, and Ser67. Position 74 is a phosphothreonine (Thr74). Residues Gly78–Arg93 are compositionally biased toward low complexity. Ser79 is modified (phosphoserine). Residues Arg86 and Arg88 each carry the omega-N-methylarginine modification. Residues Lys97–Asp106 show a composition bias toward basic and acidic residues. A compositionally biased stretch (acidic residues) spans Lys107 to Asn117. Positions Asp109–Gly153 constitute an LEM domain. The tract at residues Thr138 to Leu243 is NAKAP95-binding N. Position 154 is a phosphothreonine (Thr154). Residues Glu155–Asn178 are compositionally biased toward polar residues. Phosphoserine occurs at positions 156 and 159. A phosphothreonine mark is found at Thr160 and Thr164. 6 positions are modified to phosphoserine: Ser166, Ser168, Ser177, Ser180, Ser184, and Ser190. A compositionally biased stretch (basic and acidic residues) spans Asp179–Lys203. Residue Lys207 is modified to N6-acetyllysine. Thr211 carries the phosphothreonine modification. The segment covering Asn220–Ser237 has biased composition (polar residues). A phosphoserine mark is found at Ser222, Ser224, Ser250, Ser254, Ser265, Ser292, and Ser306. The interval Thr299–Ala371 is binds lamins B. Residues Gly300–Pro374 form an NAKAP95-binding C region. Phosphothreonine is present on Thr312. Residue Ser315 is modified to Phosphoserine. Arg320 is modified (citrulline). Phosphoserine occurs at positions 362, 378, and 385. Lys389 bears the N6-acetyllysine mark. A Glycyl lysine isopeptide (Lys-Gly) (interchain with G-Cter in SUMO2) cross-link involves residue Lys401. Ser402 carries the phosphoserine modification. A helical; Signal-anchor for type II membrane protein membrane pass occupies residues Ile411 to Met434. The Lumenal segment spans residues Glu435–Asn454.

It belongs to the LEM family. Interacts with LMNB1, LMNB2, BANF1, AKAP8L, GMCL and chromosomes. Isoform Zeta interacts with BANF1/BAF and may sequester it in the cytoplasm. Post-translationally, mitosis-specific phosphorylation specifically abolishes its binding to lamin B and chromosomes. Citrullinated by PADI4. As to expression, expressed in many tissues. Most abundant in adult thymus and fetal liver.

Its subcellular location is the nucleus inner membrane. It localises to the cytoplasm. Its function is as follows. May help direct the assembly of the nuclear lamina and thereby help maintain the structural organization of the nuclear envelope. Possible receptor for attachment of lamin filaments to the inner nuclear membrane. May be involved in the control of initiation of DNA replication through its interaction with NAKAP95. Functionally, thymopoietin (TP) and Thymopentin (TP5) may play a role in T-cell development and function. TP5 is an immunomodulating pentapeptide. In Homo sapiens (Human), this protein is Lamina-associated polypeptide 2, isoforms beta/gamma (TMPO).